Reading from the N-terminus, the 429-residue chain is Ribosomal RNA small subunit methyltransferase B (429 aa).

S-adenosyl-L-methionine contacts are provided by residues 254–260, D277, D303, and D322; that span reads CAAPGGK. Catalysis depends on C375, which acts as the Nucleophile.

Belongs to the class I-like SAM-binding methyltransferase superfamily. RsmB/NOP family.

It localises to the cytoplasm. It carries out the reaction cytidine(967) in 16S rRNA + S-adenosyl-L-methionine = 5-methylcytidine(967) in 16S rRNA + S-adenosyl-L-homocysteine + H(+). In terms of biological role, specifically methylates the cytosine at position 967 (m5C967) of 16S rRNA. This chain is Ribosomal RNA small subunit methyltransferase B, found in Escherichia fergusonii (strain ATCC 35469 / DSM 13698 / CCUG 18766 / IAM 14443 / JCM 21226 / LMG 7866 / NBRC 102419 / NCTC 12128 / CDC 0568-73).